The chain runs to 327 residues: ATPase GET3 (327 aa).

27–34 is an ATP binding site; the sequence is KGGVGKTT. The active site involves Asp-56. The ATP site is built by Glu-231 and Asn-258. 2 residues coordinate Zn(2+): Cys-269 and Cys-272.

This sequence belongs to the arsA ATPase family. Homodimer. Component of the Golgi to ER traffic (GET) complex, which is composed of GET1, GET2 and GET3. Within the complex, GET1 and GET2 form a heterotetramer which is stabilized by phosphatidylinositol binding and which binds to the GET3 homodimer. Interacts with the chloride channel protein GEF1.

It is found in the cytoplasm. The protein localises to the endoplasmic reticulum. It localises to the golgi apparatus. Its function is as follows. ATPase required for the post-translational delivery of tail-anchored (TA) proteins to the endoplasmic reticulum. Recognizes and selectively binds the transmembrane domain of TA proteins in the cytosol. This complex then targets to the endoplasmic reticulum by membrane-bound receptors GET1 and GET2, where the tail-anchored protein is released for insertion. This process is regulated by ATP binding and hydrolysis. ATP binding drives the homodimer towards the closed dimer state, facilitating recognition of newly synthesized TA membrane proteins. ATP hydrolysis is required for insertion. Subsequently, the homodimer reverts towards the open dimer state, lowering its affinity for the GET1-GET2 receptor, and returning it to the cytosol to initiate a new round of targeting. Cooperates with the HDEL receptor ERD2 to mediate the ATP-dependent retrieval of resident ER proteins that contain a C-terminal H-D-E-L retention signal from the Golgi to the ER. Involved in low-level resistance to the oxyanions arsenite and arsenate, and in heat tolerance. The chain is ATPase GET3 from Yarrowia lipolytica (strain CLIB 122 / E 150) (Yeast).